Reading from the N-terminus, the 209-residue chain is NILLSSTLFVLLMFQIIGSGLGCDMKVRGLDANMKKMILDLPNKKRQIVANGQQSGQPSAPNMKELHWNDEIAANAQRSGETGVFEPTAKSLRKTTKYSYLGENIYKGFYPDPIPKSVNGWYEEVKDVPPAVVKSFSSGGPMFGHYTQMVWANTEPLGCGLVTAFDRNSYLFCQYDPGGNYRSHPIYKQGPPASDCKNGKSSKYPGLCN.

The N-terminal stretch at 1-22 (NILLSSTLFVLLMFQIIGSGLG) is a signal peptide.

Contains 2 disulfide bonds. As to expression, expressed by the venom gland.

It is found in the secreted. In terms of biological role, may act as a voltage-gated calcium channel inhibitor. This chain is Scoloptoxin SSD346, found in Scolopendra dehaani (Thai centipede).